Consider the following 357-residue polypeptide: Probable dual-specificity RNA methyltransferase RlmN (357 aa).

E95 (proton acceptor) is an active-site residue. The region spanning 106–340 is the Radical SAM core domain; the sequence is NRDRHTVCVS…VSVREEKGTD (235 aa). Cysteines 113 and 345 form a disulfide. 3 residues coordinate [4Fe-4S] cluster: C120, C124, and C127. S-adenosyl-L-methionine contacts are provided by residues 172–173, S204, 227–229, and N302; these read GE and SLH. C345 functions as the S-methylcysteine intermediate in the catalytic mechanism.

It belongs to the radical SAM superfamily. RlmN family. [4Fe-4S] cluster serves as cofactor.

It is found in the cytoplasm. It carries out the reaction adenosine(2503) in 23S rRNA + 2 reduced [2Fe-2S]-[ferredoxin] + 2 S-adenosyl-L-methionine = 2-methyladenosine(2503) in 23S rRNA + 5'-deoxyadenosine + L-methionine + 2 oxidized [2Fe-2S]-[ferredoxin] + S-adenosyl-L-homocysteine. The enzyme catalyses adenosine(37) in tRNA + 2 reduced [2Fe-2S]-[ferredoxin] + 2 S-adenosyl-L-methionine = 2-methyladenosine(37) in tRNA + 5'-deoxyadenosine + L-methionine + 2 oxidized [2Fe-2S]-[ferredoxin] + S-adenosyl-L-homocysteine. Specifically methylates position 2 of adenine 2503 in 23S rRNA and position 2 of adenine 37 in tRNAs. This chain is Probable dual-specificity RNA methyltransferase RlmN, found in Desulfitobacterium hafniense (strain DSM 10664 / DCB-2).